The sequence spans 314 residues: Acetyl-coenzyme A carboxylase carboxyl transferase subunit beta (314 aa).

The 270-residue stretch at 24–293 folds into the CoA carboxyltransferase N-terminal domain; it reads LWIKCPDTGQ…IDAAPEPSPA (270 aa). A disordered region spans residues 283–314; it reads EIDAAPEPSPAAEEPAEPMPAPEAAAPSAPPA. Composition is skewed to low complexity over residues 284–295 and 304–314; these read IDAAPEPSPAAE and PEAAAPSAPPA.

The protein belongs to the AccD/PCCB family. As to quaternary structure, acetyl-CoA carboxylase is a heterohexamer composed of biotin carboxyl carrier protein (AccB), biotin carboxylase (AccC) and two subunits each of ACCase subunit alpha (AccA) and ACCase subunit beta (AccD).

The protein resides in the cytoplasm. The enzyme catalyses N(6)-carboxybiotinyl-L-lysyl-[protein] + acetyl-CoA = N(6)-biotinyl-L-lysyl-[protein] + malonyl-CoA. It functions in the pathway lipid metabolism; malonyl-CoA biosynthesis; malonyl-CoA from acetyl-CoA: step 1/1. In terms of biological role, component of the acetyl coenzyme A carboxylase (ACC) complex. Biotin carboxylase (BC) catalyzes the carboxylation of biotin on its carrier protein (BCCP) and then the CO(2) group is transferred by the transcarboxylase to acetyl-CoA to form malonyl-CoA. This is Acetyl-coenzyme A carboxylase carboxyl transferase subunit beta from Nitrobacter hamburgensis (strain DSM 10229 / NCIMB 13809 / X14).